Here is a 491-residue protein sequence, read N- to C-terminus: Ketol-acid reductoisomerase (NADP(+)) (491 aa).

Positions 15 to 208 (AQLGKCRFMG…GGHRAGVLES (194 aa)) constitute a KARI N-terminal Rossmann domain. Residues 45-48 (CGAQ), Arg-68, Arg-76, Ser-78, and 108-110 (DKQ) each bind NADP(+). His-132 is a catalytic residue. Gly-158 contributes to the NADP(+) binding site. 2 consecutive KARI C-terminal knotted domains span residues 209–344 (SFVA…TAPQ) and 345–484 (YEGK…MTDM). 4 residues coordinate Mg(2+): Asp-217, Glu-221, Glu-389, and Glu-393. Residue Ser-414 coordinates substrate.

This sequence belongs to the ketol-acid reductoisomerase family. Mg(2+) serves as cofactor.

The catalysed reaction is (2R)-2,3-dihydroxy-3-methylbutanoate + NADP(+) = (2S)-2-acetolactate + NADPH + H(+). It carries out the reaction (2R,3R)-2,3-dihydroxy-3-methylpentanoate + NADP(+) = (S)-2-ethyl-2-hydroxy-3-oxobutanoate + NADPH + H(+). The protein operates within amino-acid biosynthesis; L-isoleucine biosynthesis; L-isoleucine from 2-oxobutanoate: step 2/4. Its pathway is amino-acid biosynthesis; L-valine biosynthesis; L-valine from pyruvate: step 2/4. In terms of biological role, involved in the biosynthesis of branched-chain amino acids (BCAA). Catalyzes an alkyl-migration followed by a ketol-acid reduction of (S)-2-acetolactate (S2AL) to yield (R)-2,3-dihydroxy-isovalerate. In the isomerase reaction, S2AL is rearranged via a Mg-dependent methyl migration to produce 3-hydroxy-3-methyl-2-ketobutyrate (HMKB). In the reductase reaction, this 2-ketoacid undergoes a metal-dependent reduction by NADPH to yield (R)-2,3-dihydroxy-isovalerate. The sequence is that of Ketol-acid reductoisomerase (NADP(+)) from Klebsiella pneumoniae (strain 342).